Here is a 155-residue protein sequence, read N- to C-terminus: SsrA-binding protein (155 aa).

The protein belongs to the SmpB family.

The protein localises to the cytoplasm. Its function is as follows. Required for rescue of stalled ribosomes mediated by trans-translation. Binds to transfer-messenger RNA (tmRNA), required for stable association of tmRNA with ribosomes. tmRNA and SmpB together mimic tRNA shape, replacing the anticodon stem-loop with SmpB. tmRNA is encoded by the ssrA gene; the 2 termini fold to resemble tRNA(Ala) and it encodes a 'tag peptide', a short internal open reading frame. During trans-translation Ala-aminoacylated tmRNA acts like a tRNA, entering the A-site of stalled ribosomes, displacing the stalled mRNA. The ribosome then switches to translate the ORF on the tmRNA; the nascent peptide is terminated with the 'tag peptide' encoded by the tmRNA and targeted for degradation. The ribosome is freed to recommence translation, which seems to be the essential function of trans-translation. The chain is SsrA-binding protein from Bacillus mycoides (strain KBAB4) (Bacillus weihenstephanensis).